The chain runs to 790 residues: Probable quinate dehydrogenase (quinone) (790 aa).

Transmembrane regions (helical) follow at residues 22–42 (GSWY…LIVL), 48–68 (ALVY…DAGL), 77–94 (LMLP…WPAL), and 106–126 (AYGV…GMFV). Positions 171 to 200 (RSNGRPAAGSPGPTTPGEIANSDGNGAEDQ) are disordered. The segment covering 174–187 (GRPAAGSPGPTTPG) has biased composition (low complexity).

Belongs to the bacterial PQQ dehydrogenase family. Pyrroloquinoline quinone is required as a cofactor.

The protein localises to the cell membrane. It carries out the reaction L-quinate + a quinone = 3-dehydroquinate + a quinol. The protein operates within aromatic compound metabolism; 3,4-dihydroxybenzoate biosynthesis; 3-dehydroquinate from D-quinate (PQQ route): step 1/1. The chain is Probable quinate dehydrogenase (quinone) (qumA) from Xanthomonas campestris pv. juglandis (Xanthomonas arboricola pv. juglandis).